Here is a 116-residue protein sequence, read N- to C-terminus: T cell receptor alpha variable 19 (116 aa).

The signal sequence occupies residues 1–21; sequence MLTASLLRAVIASICVVSSMA. The 95-residue stretch at 22–116 folds into the Ig-like domain; it reads QKVTQAQTEI…SAVYFCALSE (95 aa). Cysteines 43 and 112 form a disulfide. An N-linked (GlcNAc...) asparagine glycan is attached at asparagine 96.

Alpha-beta TR is a heterodimer composed of an alpha and beta chain; disulfide-linked. The alpha-beta TR is associated with the transmembrane signaling CD3 coreceptor proteins to form the TR-CD3 (TcR or TCR). The assembly of alpha-beta TR heterodimers with CD3 occurs in the endoplasmic reticulum where a single alpha-beta TR heterodimer associates with one CD3D-CD3E heterodimer, one CD3G-CD3E heterodimer and one CD247 homodimer forming a stable octameric structure. CD3D-CD3E and CD3G-CD3E heterodimers preferentially associate with TR alpha and TR beta chains, respectively. The association of the CD247 homodimer is the last step of TcR assembly in the endoplasmic reticulum and is required for transport to the cell surface.

The protein resides in the cell membrane. Its function is as follows. V region of the variable domain of T cell receptor (TR) alpha chain that participates in the antigen recognition. Alpha-beta T cell receptors are antigen specific receptors which are essential to the immune response and are present on the cell surface of T lymphocytes. Recognize peptide-major histocompatibility (MH) (pMH) complexes that are displayed by antigen presenting cells (APC), a prerequisite for efficient T cell adaptive immunity against pathogens. Binding of alpha-beta TR to pMH complex initiates TR-CD3 clustering on the cell surface and intracellular activation of LCK that phosphorylates the ITAM motifs of CD3G, CD3D, CD3E and CD247 enabling the recruitment of ZAP70. In turn ZAP70 phosphorylates LAT, which recruits numerous signaling molecules to form the LAT signalosome. The LAT signalosome propagates signal branching to three major signaling pathways, the calcium, the mitogen-activated protein kinase (MAPK) kinase and the nuclear factor NF-kappa-B (NF-kB) pathways, leading to the mobilization of transcription factors that are critical for gene expression and essential for T cell growth and differentiation. The T cell repertoire is generated in the thymus, by V-(D)-J rearrangement. This repertoire is then shaped by intrathymic selection events to generate a peripheral T cell pool of self-MH restricted, non-autoaggressive T cells. Post-thymic interaction of alpha-beta TR with the pMH complexes shapes TR structural and functional avidity. The polypeptide is T cell receptor alpha variable 19 (Homo sapiens (Human)).